Consider the following 641-residue polypeptide: Sodium-dependent nutrient amino acid transporter 1 (641 aa).

The disordered stretch occupies residues 1 to 38 (MELKGVQPSNGSSNGSGNGATNAASTEKTDAEKPTAER). Over 1–40 (MELKGVQPSNGSSNGSGNGATNAASTEKTDAEKPTAERTN) the chain is Cytoplasmic. A compositionally biased stretch (low complexity) spans 9–26 (SNGSSNGSGNGATNAAST). A compositionally biased stretch (basic and acidic residues) spans 27–36 (EKTDAEKPTA). 3 consecutive transmembrane segments (helical) span residues 41–61 (WGNGLEFLMSCISVSVGLGNV), 74–94 (GAFLIPYIIVLFLIGKPMYYL), and 111–131 (SVVPGFVGVGYGQAFGTICII). Residues Asn-185 and Asn-190 are each glycosylated (N-linked (GlcNAc...) asparagine). The next 9 helical transmembrane spans lie at 229–249 (PDWKLTLALFVAWVVIFLVIM), 258–278 (AAYFLALFPYVVLFVLLIRAV), 307–327 (AVVQCFFSLAVGSGPIIMFAS), 341–361 (IVTTLDTLTSLLGGITIFAIL), 401–421 (LFSVLFFFMLFVLGIGSIVAL), 447–467 (VCGFLMGLVYVTPGGQWILTL), 474–494 (TYVVFILAIFELAGIVWVYGL), 516–536 (CWSFFTPVMMIIIFIYSMVTI), and 552–572 (IAGWLLFAIGAAQFPLWGLWY).

It belongs to the sodium:neurotransmitter symporter (SNF) (TC 2.A.22) family. In larvae, weak specific expression in the anterior midgut just proximal to the gastric caeca reproductive rudiments, common ureters of the Malpighian tubules, and distal swollen portion of the anterior pair of Malpighian tubules. Expression is also seen in the imaginal disks of the head; brain hemispheres and the ventral ganglion. Stronger expression in the posterior midgut.

The protein resides in the membrane. In terms of biological role, unusual broad substrate spectrum amino acid:sodium cotransporter that promotes absorption of the D isomers of essential amino acids. Neutral amino acids are the preferred substrates, especially methionine and phenylalanine. In Drosophila melanogaster (Fruit fly), this protein is Sodium-dependent nutrient amino acid transporter 1 (NAAT1).